The sequence spans 417 residues: Gamma-glutamyl phosphate reductase (417 aa).

Belongs to the gamma-glutamyl phosphate reductase family.

It localises to the cytoplasm. It catalyses the reaction L-glutamate 5-semialdehyde + phosphate + NADP(+) = L-glutamyl 5-phosphate + NADPH + H(+). It functions in the pathway amino-acid biosynthesis; L-proline biosynthesis; L-glutamate 5-semialdehyde from L-glutamate: step 2/2. Its function is as follows. Catalyzes the NADPH-dependent reduction of L-glutamate 5-phosphate into L-glutamate 5-semialdehyde and phosphate. The product spontaneously undergoes cyclization to form 1-pyrroline-5-carboxylate. This chain is Gamma-glutamyl phosphate reductase, found in Streptococcus agalactiae serotype Ia (strain ATCC 27591 / A909 / CDC SS700).